We begin with the raw amino-acid sequence, 453 residues long: Putative F-box/FBD/LRR-repeat protein At1g66290 (453 aa).

The interval 1-28 is disordered; the sequence is MDEDGERRVRTKRSCSPESSDNGSGDEV. Residues 14–23 show a composition bias toward polar residues; sequence SCSPESSDNG. The region spanning 28–81 is the F-box domain; that stretch reads VDWISDLPEALIVLVLLNLPTKDVIKTSVLSTKWRNIWRYVPRLDLDNRHFTEF. LRR repeat units lie at residues 155–179, 210–235, 246–269, 305–329, and 358–381; these read SLKL…VLVL, LDNV…SSKS, APKL…NLSS, LSRV…RCEP, and CSNL…IISE. The FBD domain maps to 373 to 423; it reads RKRTSIISEPRCLLSSLEYVKIEFALDKGKMELVRYLLENSPILKKLTLSL.

This chain is Putative F-box/FBD/LRR-repeat protein At1g66290, found in Arabidopsis thaliana (Mouse-ear cress).